The sequence spans 430 residues: Glutamine synthetase leaf isozyme, chloroplastic (430 aa).

The N-terminal 49 residues, 1–49 (MAQILAPSTQWQMRITKTSPCATPITSKMWSSLVMKQTKKVAHSAKFRV), are a transit peptide targeting the chloroplast. The GS beta-grasp domain occupies 77-157 (IIAEYIWIGG…VVCDAYTPAG (81 aa)). The tract at residues 99-119 (SKPVSHPSEVPKWNYDGSSTG) is disordered. One can recognise a GS catalytic domain in the interval 161–430 (PTNKRHRAAE…LAAQKIALKV (270 aa)).

This sequence belongs to the glutamine synthetase family. As to quaternary structure, homooctamer.

The protein resides in the plastid. Its subcellular location is the chloroplast. It carries out the reaction L-glutamate + NH4(+) + ATP = L-glutamine + ADP + phosphate + H(+). The light-modulated chloroplast enzyme, encoded by a nuclear gene and expressed primarily in leaves, is responsible for the reassimilation of the ammonia generated by photorespiration. This Pisum sativum (Garden pea) protein is Glutamine synthetase leaf isozyme, chloroplastic (GS2).